The chain runs to 140 residues: Midkine (140 aa).

The signal sequence occupies residues 1–22 (MQHRGFFLLALLALLVVTSAVA). 5 disulfide bridges follow: Cys34–Cys58, Cys42–Cys67, Cys49–Cys71, Cys81–Cys113, and Cys91–Cys123.

The protein belongs to the pleiotrophin family. Homodimer. Interacts with ALK. Interacts with LRP1; promotes neuronal survival. Interacts with LRP2. Interacts with NCAM1. Interacts (via C-terminal) with PTPRZ1 (via chondroitin sulfate chains); this interaction is inhibited by PTN; this interaction promotes neuronal migration. Interacts with NCL; this interaction promotes NCL clustering and lateral movements of this complex into lipid rafts leading to MDK internalization. Interacts with LRP6 and LRP8: this interaction is calcium dependent. Interacts with ITGA4. Interacts with ITGA6. Interacts with ITGB1. Interacts with ITGA4:ITGB1 complex; this interaction mediates MDK-induced osteoblast cells migration through PXN phosphorylation. Interacts with ITGA6:ITGB1 complex; this interaction mediates MDK-induced neurite outgrowth. Interacts with NOTCH2; this interactio mediates a nuclear accumulation of NOTCH2 and therefore activation of NOTCH2 signaling leading to interaction between HES1 and STAT3. Interacts with GPC2 (via heparan sulfate chain); this interaction is inhibited by heparin followed by chondroitin sulfate E; this interaction induces GPC2 clustering through heparan sulfate chain; this interaction induces neuronal cell adhesion and neurite outgrowth. Interacts with SDC3; this interaction induces SDC3 clustering; this interaction induces neuronal cell adhesion and neurite outgrowth. Interacts with SDC1. Interacts with CSPG5; this interaction promotes elongation of oligodendroglial precursor-like cells. In terms of tissue distribution, expressed in the follicular epithelium and granulosa cells of the ovary.

Its subcellular location is the secreted. Its function is as follows. Secreted protein that functions as a cytokine and growth factor and mediates its signal through cell-surface proteoglycan and non-proteoglycan receptors. Binds cell-surface proteoglycan receptors via their chondroitin sulfate (CS) groups. Thereby regulates many processes like inflammatory response, cell proliferation, cell adhesion, cell growth, cell survival, tissue regeneration, cell differentiation and cell migration. Participates in inflammatory processes by exerting two different activities. Firstly, mediates neutrophils and macrophages recruitment to the sites of inflammation both by direct action by cooperating namely with ITGB2 via LRP1 and by inducing chemokine expression. This inflammation can be accompanied by epithelial cell survival and smooth muscle cell migration after renal and vessel damage, respectively. Secondly, suppresses the development of tolerogenic dendric cells thereby inhibiting the differentiation of regulatory T cells and also promote T cell expansion through NFAT signaling and Th1 cell differentiation. Promotes tissue regeneration after injury or trauma. After heart damage negatively regulates the recruitment of inflammatory cells and mediates cell survival through activation of anti-apoptotic signaling pathways via MAPKs and AKT pathways through the activation of angiogenesis. Also facilitates liver regeneration as well as bone repair by recruiting macrophage at trauma site and by promoting cartilage development by facilitating chondrocyte differentiation. Plays a role in brain by promoting neural precursor cells survival and growth through interaction with heparan sulfate proteoglycans. Binds PTPRZ1 and promotes neuronal migration and embryonic neurons survival. Binds SDC3 or GPC2 and mediates neurite outgrowth and cell adhesion. Binds chondroitin sulfate E and heparin leading to inhibition of neuronal cell adhesion induced by binding with GPC2. Binds CSPG5 and promotes elongation of oligodendroglial precursor-like cells. Also binds ITGA6:ITGB1 complex; this interaction mediates MDK-induced neurite outgrowth. Binds LRP1; promotes neuronal survival. Binds ITGA4:ITGB1 complex; this interaction mediates MDK-induced osteoblast cells migration through PXN phosphorylation. Binds anaplastic lymphoma kinase (ALK) which induces ALK activation and subsequent phosphorylation of the insulin receptor substrate (IRS1), followed by the activation of mitogen-activated protein kinase (MAPK) and PI3-kinase, and the induction of cell proliferation. Promotes epithelial to mesenchymal transition through interaction with NOTCH2. During arteriogenesis, plays a role in vascular endothelial cell proliferation by inducing VEGFA expression and release which in turn induces nitric oxide synthase expression. Moreover activates vasodilation through nitric oxide synthase activation. Negatively regulates bone formation in response to mechanical load by inhibiting Wnt/beta-catenin signaling in osteoblasts. In addition plays a role in hippocampal development, working memory, auditory response, early fetal adrenal gland development and the female reproductive system. This is Midkine from Mus musculus (Mouse).